Reading from the N-terminus, the 394-residue chain is Probable acetyl-CoA acyltransferase (394 aa).

C88 functions as the Acyl-thioester intermediate in the catalytic mechanism. Catalysis depends on proton acceptor residues H349 and C378.

The protein belongs to the thiolase-like superfamily. Thiolase family.

It localises to the cytoplasm. It catalyses the reaction 2 acetyl-CoA = acetoacetyl-CoA + CoA. The sequence is that of Probable acetyl-CoA acyltransferase from Staphylococcus epidermidis (strain ATCC 35984 / DSM 28319 / BCRC 17069 / CCUG 31568 / BM 3577 / RP62A).